The following is a 197-amino-acid chain: Peptidoglycan-recognition protein 1 (197 aa).

The first 23 residues, 1–23, serve as a signal peptide directing secretion; the sequence is MKLATITFFLLTEIFFYISYAEA. Disulfide bonds link C31–C154 and C68–C74. The 128-residue stretch at 53–180 folds into the N-acetylmuramoyl-L-alanine amidase domain; it reads KPLERVVIHH…RNVKATKSPG (128 aa).

Belongs to the N-acetylmuramoyl-L-alanine amidase 2 family. As to expression, localizes to plasma (at protein level).

It localises to the secreted. Functionally, peptidoglycan-recognition protein probably involved in innate immunity by binding to peptidoglycans (PGN) of bacteria and activating the prophenoloxidase (proPO) cascade immune response. Binds to 1,3-beta-D-glucan and PGN. The polypeptide is Peptidoglycan-recognition protein 1 (PGRP-1) (Holotrichia diomphalia (Korean black chafer)).